A 216-amino-acid chain; its full sequence is Probable GH family 25 lysozyme 5 (216 aa).

The N-terminal stretch at 1 to 20 (MRFIISLLFVFTLIFNLAFS) is a signal peptide. Positions 21 to 216 (HIGIDVSSGT…GLGIDKNYWE (196 aa)) constitute a Ch-type lysozyme domain. Asp25 is an active-site residue. The N-linked (GlcNAc...) asparagine glycan is linked to Asn31. Catalysis depends on residues Asp113 and Glu115.

It belongs to the glycosyl hydrolase 25 family.

Its subcellular location is the secreted. The enzyme catalyses Hydrolysis of (1-&gt;4)-beta-linkages between N-acetylmuramic acid and N-acetyl-D-glucosamine residues in a peptidoglycan and between N-acetyl-D-glucosamine residues in chitodextrins.. The sequence is that of Probable GH family 25 lysozyme 5 from Dictyostelium discoideum (Social amoeba).